Here is a 181-residue protein sequence, read N- to C-terminus: Mannose-specific lectin (181 aa).

The signal sequence occupies residues M1–A30. The 110-residue stretch at R31–R140 folds into the Bulb-type lectin domain. Positions 56, 58, 60, 64, 71, 72, 74, 88, 90, 92, 96, 103, 104, 107, 114, 120, 122, 124, 128, and 133 each coordinate alpha-D-mannopyranose. C59 and C83 are joined by a disulfide.

Homodimer.

The protein resides in the secreted. Its function is as follows. Mannose-specific lectin. Shows agglutinating activity towards rabbit erythrocytes. However, it does not show agglutinating activity towards human erythrocytes. Has insecticidal activity against the cotton leafworm S.littoralis and the peach potato aphid M.persicae. Also displays antiviral activity and therefore may contribute to defense against infections. The polypeptide is Mannose-specific lectin (Allium sativum (Garlic)).